Reading from the N-terminus, the 548-residue chain is Membrane-associated tyrosine- and threonine-specific cdc2-inhibitory kinase (548 aa).

The segment at 61 to 89 (PNKQRSWSQPRPQSVSFRSPQNKTPASKL) is disordered. Residues 63–85 (KQRSWSQPRPQSVSFRSPQNKTP) show a composition bias toward polar residues. One can recognise a Protein kinase domain in the interval 103–353 (FKSICKLGRG…VDWLLSLPAI (251 aa)). Residues 109 to 117 (LGRGSFGEV) and Lys-132 each bind ATP. Asp-226 acts as the Proton acceptor in catalysis. Positions 231, 244, and 246 each coordinate Mg(2+). Residues 376-392 (VYQFIVWLLSFVFQWLN) carry the Membrane-association motif motif. Residues 464–523 (SPDLLSRPSLGSTSTPRNLSPEFSMRKRSALPLTPNVSRISQDSTGKSRSPSTSHSSSGF) are disordered. The span at 472–481 (SLGSTSTPRN) shows a compositional bias: polar residues. The residue at position 478 (Thr-478) is a Phosphothreonine; by CDK1. The span at 507–521 (STGKSRSPSTSHSSS) shows a compositional bias: low complexity.

This sequence belongs to the protein kinase superfamily. Ser/Thr protein kinase family. WEE1 subfamily. As to quaternary structure, interacts with CDC2-CCNB1 complex. Interacts with Mos during oocyte maturation. Post-translationally, autophosphorylated. Phosphorylated on undefined residues by RSK2 and Mos kinases. Phosphorylation at Thr-478 by cdk1 creates a docking site for plk1/plx1, leading to subsequent phosphorylation by plk1/plk1 and inhibition of the protein kinase activity kinase activity.

Its subcellular location is the endoplasmic reticulum membrane. It localises to the golgi apparatus membrane. The enzyme catalyses L-seryl-[protein] + ATP = O-phospho-L-seryl-[protein] + ADP + H(+). The catalysed reaction is L-threonyl-[protein] + ATP = O-phospho-L-threonyl-[protein] + ADP + H(+). Its activity is regulated as follows. Negatively regulated by hyperphosphorylation during mitosis. The plk1/plk1 protein kinase may be required for mitotic phosphorylation. Inactivated during oocyte maturation by phosphorylation by RSK2 and Mos kinase. Acts as a negative regulator of entry into mitosis (G2 to M transition) by phosphorylation of the CDK1 kinase specifically when CDK1 is complexed to cyclins. Mediates phosphorylation of CDK1 predominantly on 'Thr-14'. Also involved in Golgi fragmentation. May be involved in phosphorylation of CDK1 on 'Tyr-15' to a lesser degree, however tyrosine kinase activity is unclear and may be indirect. In Xenopus laevis (African clawed frog), this protein is Membrane-associated tyrosine- and threonine-specific cdc2-inhibitory kinase (pkmyt1).